Here is a 219-residue protein sequence, read N- to C-terminus: uncharacterized protein (219 aa).

One can recognise an ACT domain in the interval 4-79 (GLRIIAENKI…YIIEIEEEES (76 aa)).

This is an uncharacterized protein from Archaeoglobus fulgidus (strain ATCC 49558 / DSM 4304 / JCM 9628 / NBRC 100126 / VC-16).